Reading from the N-terminus, the 680-residue chain is E3 ubiquitin-protein ligase Midline-1 (680 aa).

Residues 10–60 form an RING-type zinc finger; sequence CPICLELFEDPLLLPCAHSLCFNCAHRILVSHCATNEPVESINAFQCPTCR. Phosphoserine occurs at positions 92 and 96. B box-type zinc fingers lie at residues 116–165 and 172–212; these read KVLC…IEPI and GLMC…VAAL. Zn(2+) contacts are provided by C119, C122, C134, C137, C142, C145, H150, H159, C175, H178, C198, and H204. A coiled-coil region spans residues 205–264; sequence RDHQVAALSERYDKLKQNLESNLTNLIKRNTELETLLAKLIQTCQHVEVNASRQEAKLTE. The COS domain maps to 320 to 379; that stretch reads LKENDHARFLQTAKNITERVSMATASSQVLIPEINLNDTFDTFALDFSREKKLLECLDYL. The Fibronectin type-III domain occupies 384-494; it reads PPAIREELCT…RSSEPGKLKT (111 aa). The segment covering 484 to 498 has biased composition (polar residues); it reads SRSSEPGKLKTNSQP. Disordered regions lie at residues 484–503 and 516–535; these read SRSS…RLDP and NLTV…PERF. The region spanning 495 to 672 is the B30.2/SPRY domain; sequence NSQPFRLDPK…IVTGLPIPDH (178 aa). A compositionally biased stretch (basic and acidic residues) spans 516–533; that stretch reads NLTVERDESSSKKSHAPE. S524 carries the phosphoserine modification.

The protein belongs to the TRIM/RBCC family. As to quaternary structure, homodimer or heterodimer with MID2. Interacts with IGBP1. Post-translationally, phosphorylated. Ubiquitously expressed in fetus and adult. At 9 dpc-10.5 dpc, highest expression found in frontonasal processes, branchial arches and CNS. From 12.5 dpc to 16.5 dpc, high levels found in rostral part of CNS. At 14.5 dpc, begins to be highly expressed in kidney and lung. At 16.5 dpc, highly expressed in the mucosa of the hindgut and cutaneous region of the stomach.

Its subcellular location is the cytoplasm. The protein resides in the cytoskeleton. It carries out the reaction S-ubiquitinyl-[E2 ubiquitin-conjugating enzyme]-L-cysteine + [acceptor protein]-L-lysine = [E2 ubiquitin-conjugating enzyme]-L-cysteine + N(6)-ubiquitinyl-[acceptor protein]-L-lysine.. Functionally, has E3 ubiquitin ligase activity towards IGBP1, promoting its monoubiquitination, which results in deprotection of the catalytic subunit of protein phosphatase PP2A, and its subsequent degradation by polyubiquitination. This chain is E3 ubiquitin-protein ligase Midline-1 (Mid1), found in Mus musculus (Mouse).